The primary structure comprises 258 residues: Acyl-[acyl-carrier-protein]--UDP-N-acetylglucosamine O-acyltransferase (258 aa).

It belongs to the transferase hexapeptide repeat family. LpxA subfamily. Homotrimer.

It localises to the cytoplasm. It carries out the reaction a (3R)-hydroxyacyl-[ACP] + UDP-N-acetyl-alpha-D-glucosamine = a UDP-3-O-[(3R)-3-hydroxyacyl]-N-acetyl-alpha-D-glucosamine + holo-[ACP]. Its pathway is glycolipid biosynthesis; lipid IV(A) biosynthesis; lipid IV(A) from (3R)-3-hydroxytetradecanoyl-[acyl-carrier-protein] and UDP-N-acetyl-alpha-D-glucosamine: step 1/6. Functionally, involved in the biosynthesis of lipid A, a phosphorylated glycolipid that anchors the lipopolysaccharide to the outer membrane of the cell. This is Acyl-[acyl-carrier-protein]--UDP-N-acetylglucosamine O-acyltransferase from Pseudomonas syringae pv. syringae (strain B728a).